The chain runs to 338 residues: Heat-inducible transcription repressor HrcA (338 aa).

Belongs to the HrcA family.

Functionally, negative regulator of class I heat shock genes (grpE-dnaK-dnaJ and groELS operons). Prevents heat-shock induction of these operons. In Bacillus anthracis (strain A0248), this protein is Heat-inducible transcription repressor HrcA.